Here is a 780-residue protein sequence, read N- to C-terminus: Pendrin (780 aa).

Residues 1-87 (MAARDRRSEP…YRVKEWLLSD (87 aa)) lie on the Cytoplasmic side of the membrane. A helical membrane pass occupies residues 88–108 (IISGVSTGLVGTLQGMAYALL). Ala-109 is a topological domain (extracellular). Residues 110 to 130 (AVPVQYGLYSAFFPILTYFVF) form a helical membrane-spanning segment. The Cytoplasmic segment spans residues 131 to 135 (GTSRH). Residues 136–156 (ISVGPFPVVSLMVGSVVLSMA) traverse the membrane as a helical segment. The Extracellular segment spans residues 157-191 (PDDHFLVPSGNGSTLNTTTLDTGTRDAARVLLAST). The helical transmembrane segment at 192–212 (LTLLVGIIQLVFGGLQIGFIV) threads the bilayer. Over 213-218 (RYLADP) the chain is Cytoplasmic. Residues 219–239 (LVGGFTTAAAFQVLVSQLKIV) form a helical membrane-spanning segment. Residues 240–263 (LNVSTKNYNGVLSIIYTLIEIFQN) are Extracellular-facing. The chain crosses the membrane as a helical span at residues 264–284 (IGDTNIADFIAGLLTIIVCMA). Residues 285–295 (VKELNDRFKHK) lie on the Cytoplasmic side of the membrane. The helical transmembrane segment at 296–316 (IPVPIPIEVIVTIIATAISYG) threads the bilayer. Topologically, residues 317–344 (ANLEANYNAGIVKSIPSGFLPPVLPSVG) are extracellular. Residues 345-365 (LFSDMLAASFSIAVVAYAIAV) form a helical membrane-spanning segment. Residues 366 to 384 (SVGKVYATKHDYIIDGNQE) lie on the Cytoplasmic side of the membrane. A helical transmembrane segment spans residues 385 to 405 (FIAFGISNVFSGFFSCFVATT). The Extracellular portion of the chain corresponds to 406 to 421 (ALSRTAVQESTGGKTQ). A helical transmembrane segment spans residues 422-442 (VAGLISAVIVMVAIVALGKLL). Topologically, residues 443–448 (EPLQKS) are cytoplasmic. The chain crosses the membrane as a helical span at residues 449–469 (VLAAVVIANLKGMFMQVCDVP). At 470 to 486 (RLWKQNKTDAVIWVFTC) the chain is on the extracellular side. Residues 487 to 507 (IMSIILGLDLGLLAGLLFGLL) form a helical membrane-spanning segment. Residues 508–780 (TVVLRVQFPS…QDEAMRRLAS (273 aa)) lie on the Cytoplasmic side of the membrane. Residues 535 to 729 (HYKNLEEPEG…LTVHDAILYL (195 aa)) form the STAS domain.

This sequence belongs to the SLC26A/SulP transporter (TC 2.A.53) family. As to expression, highly expressed in the kidney (at protein level).

The protein resides in the cell membrane. It localises to the apical cell membrane. It catalyses the reaction chloride(in) = chloride(out). The catalysed reaction is iodide(out) = iodide(in). The enzyme catalyses hydrogencarbonate(in) + chloride(out) = hydrogencarbonate(out) + chloride(in). It carries out the reaction iodide(in) + hydrogencarbonate(out) = iodide(out) + hydrogencarbonate(in). It catalyses the reaction iodide(in) + chloride(out) = iodide(out) + chloride(in). The catalysed reaction is formate(in) + chloride(out) = formate(out) + chloride(in). Functionally, sodium-independent transporter of chloride and iodide. Mediates electroneutral chloride-bicarbonate and chloride-formate exchange with 1:1 stoichiometry. Mediates electroneutral iodide-chloride and iodide-bicarbonate exchange. The sequence is that of Pendrin (Slc26a4) from Rattus norvegicus (Rat).